The following is a 185-amino-acid chain: Transcription factor bHLH109 (185 aa).

In terms of domain architecture, bHLH spans 67–117 (RSMEYRMMMEKKRRKEIKDKVDILQGLMPNHCTKPDLASKLENIIEYIKSL).

It belongs to the bHLH protein family. As to quaternary structure, homodimer.

Its subcellular location is the nucleus. In terms of biological role, transcription factor involved in somatic embryogenesis. Acts as a positive regulator of somatic embryo formation. Acts as a positive regulator of ECP63 by targeting its promoter and inducing its expression. The sequence is that of Transcription factor bHLH109 (BHLH109) from Arabidopsis thaliana (Mouse-ear cress).